Reading from the N-terminus, the 348-residue chain is Heat-inducible transcription repressor HrcA (348 aa).

The protein belongs to the HrcA family.

Its function is as follows. Negative regulator of class I heat shock genes (grpE-dnaK-dnaJ and groELS operons). Prevents heat-shock induction of these operons. This is Heat-inducible transcription repressor HrcA from Thermomicrobium roseum (strain ATCC 27502 / DSM 5159 / P-2).